The primary structure comprises 367 residues: E3 ubiquitin-protein ligase RGLG3 (367 aa).

The VWFA domain occupies 37 to 257; sequence NLILGIDFTK…KEAAFALAAL (221 aa). Residues 323 to 356 form an RING-type zinc finger; it reads CPICLTNPKDMAFSCGHTTCKECGVVITTCPLCR.

As to quaternary structure, interacts with UBC30, GRXS17 and GLB3. Binds to and coactivates GAF1/IDD2 and ENY/IDD1. Widely expressed.

Its subcellular location is the cytoplasm. It localises to the nucleus. The enzyme catalyses S-ubiquitinyl-[E2 ubiquitin-conjugating enzyme]-L-cysteine + [acceptor protein]-L-lysine = [E2 ubiquitin-conjugating enzyme]-L-cysteine + N(6)-ubiquitinyl-[acceptor protein]-L-lysine.. Functionally, possesses E3 ubiquitin-protein ligase in vitro. Acts as upstream modulator of jasmonate (JA) signaling in response to various stimuli, such as JA-inhibited root growth, JA-inductive gene expression, coronatine-mediated pathogen susceptibility, wound-stimulated expression of JA-responsive genes and wound-induced JA biosynthesis. Controls fumonisin B1 (FB1)-triggered programmed cell death (PCD) by modulating the JA signaling pathway. May mediate salicylic acid (SA) suppression of JA signaling in FB1-induced responses. May mediate the formation of 'Lys-48'-linked multiubiquitin chains. Mediates the polyubiquitination and subsequent proteasomal degradation of the target protein GRXS17. This chain is E3 ubiquitin-protein ligase RGLG3, found in Arabidopsis thaliana (Mouse-ear cress).